The primary structure comprises 257 residues: 1-(5-phosphoribosyl)-5-[(5-phosphoribosylamino)methylideneamino] imidazole-4-carboxamide isomerase (257 aa).

Asp-8 acts as the Proton acceptor in catalysis. The active-site Proton donor is Asp-129.

Belongs to the HisA/HisF family.

Its subcellular location is the cytoplasm. The catalysed reaction is 1-(5-phospho-beta-D-ribosyl)-5-[(5-phospho-beta-D-ribosylamino)methylideneamino]imidazole-4-carboxamide = 5-[(5-phospho-1-deoxy-D-ribulos-1-ylimino)methylamino]-1-(5-phospho-beta-D-ribosyl)imidazole-4-carboxamide. It functions in the pathway amino-acid biosynthesis; L-histidine biosynthesis; L-histidine from 5-phospho-alpha-D-ribose 1-diphosphate: step 4/9. The polypeptide is 1-(5-phosphoribosyl)-5-[(5-phosphoribosylamino)methylideneamino] imidazole-4-carboxamide isomerase (Trichodesmium erythraeum (strain IMS101)).